Consider the following 335-residue polypeptide: Holliday junction branch migration complex subunit RuvB (335 aa).

A large ATPase domain (RuvB-L) region spans residues 1-183 (MDERIISSET…FGVIDHLEFY (183 aa)). Residues Leu-22, Arg-23, Gly-64, Lys-67, Thr-68, Thr-69, 130 to 132 (EDY), Arg-173, Tyr-183, and Arg-220 contribute to the ATP site. Position 68 (Thr-68) interacts with Mg(2+). A small ATPAse domain (RuvB-S) region spans residues 184 to 254 (TEEQLTEIVL…LAKEALTLLQ (71 aa)). The interval 257-335 (PRGLDTIDQK…HLGISYEKEV (79 aa)) is head domain (RuvB-H). Arg-293, Arg-312, and Arg-317 together coordinate DNA.

The protein belongs to the RuvB family. Homohexamer. Forms an RuvA(8)-RuvB(12)-Holliday junction (HJ) complex. HJ DNA is sandwiched between 2 RuvA tetramers; dsDNA enters through RuvA and exits via RuvB. An RuvB hexamer assembles on each DNA strand where it exits the tetramer. Each RuvB hexamer is contacted by two RuvA subunits (via domain III) on 2 adjacent RuvB subunits; this complex drives branch migration. In the full resolvosome a probable DNA-RuvA(4)-RuvB(12)-RuvC(2) complex forms which resolves the HJ.

The protein resides in the cytoplasm. The enzyme catalyses ATP + H2O = ADP + phosphate + H(+). The RuvA-RuvB-RuvC complex processes Holliday junction (HJ) DNA during genetic recombination and DNA repair, while the RuvA-RuvB complex plays an important role in the rescue of blocked DNA replication forks via replication fork reversal (RFR). RuvA specifically binds to HJ cruciform DNA, conferring on it an open structure. The RuvB hexamer acts as an ATP-dependent pump, pulling dsDNA into and through the RuvAB complex. RuvB forms 2 homohexamers on either side of HJ DNA bound by 1 or 2 RuvA tetramers; 4 subunits per hexamer contact DNA at a time. Coordinated motions by a converter formed by DNA-disengaged RuvB subunits stimulates ATP hydrolysis and nucleotide exchange. Immobilization of the converter enables RuvB to convert the ATP-contained energy into a lever motion, pulling 2 nucleotides of DNA out of the RuvA tetramer per ATP hydrolyzed, thus driving DNA branch migration. The RuvB motors rotate together with the DNA substrate, which together with the progressing nucleotide cycle form the mechanistic basis for DNA recombination by continuous HJ branch migration. Branch migration allows RuvC to scan DNA until it finds its consensus sequence, where it cleaves and resolves cruciform DNA. The chain is Holliday junction branch migration complex subunit RuvB from Listeria welshimeri serovar 6b (strain ATCC 35897 / DSM 20650 / CCUG 15529 / CIP 8149 / NCTC 11857 / SLCC 5334 / V8).